We begin with the raw amino-acid sequence, 117 residues long: Large ribosomal subunit protein bL20c (117 aa).

Belongs to the bacterial ribosomal protein bL20 family.

The protein localises to the plastid. The protein resides in the chloroplast. Binds directly to 23S ribosomal RNA and is necessary for the in vitro assembly process of the 50S ribosomal subunit. It is not involved in the protein synthesizing functions of that subunit. The sequence is that of Large ribosomal subunit protein bL20c from Populus trichocarpa (Western balsam poplar).